We begin with the raw amino-acid sequence, 735 residues long: Post-transcriptional regulator MKT1 (735 aa).

The interval 475–722 (QVIYNTMEET…ANERMKRAQK (248 aa)) is interaction with PBP1.

The protein belongs to the XPG/RAD2 endonuclease family. As to quaternary structure, forms a complex composed of at least MKT1, PBP1, XAC1 and LSM12. Within the complex, interacts (via C-terminus) with PBP1; the interaction is direct. Interacts with RNA-binding protein ZC3H11 (via MKT1-binding motif); the interaction is direct. May interact with RNA-binding proteins CFB1 and CFB2. Interacts with the EIF4E6-EIF4G5 translation initiation complex via EIF4G5; the interaction with EIF4G5 is direct.

The protein localises to the cytoplasm. Its subcellular location is the cytosol. The protein resides in the stress granule. Involved in post-transcriptional regulation of gene expression. Promotes mRNA stabilization by recruiting a complex containing PBP1, LSM12 and XAC1 to mRNAs. Recruited to mRNAs by sequence-specific RNA binding proteins. May regulate translation through interactions with the EIF4E6-EIF4G5 translation initiation complex. This is Post-transcriptional regulator MKT1 from Trypanosoma brucei brucei (strain 927/4 GUTat10.1).